Reading from the N-terminus, the 93-residue chain is Phosphoribosyl-ATP pyrophosphatase (93 aa).

This sequence belongs to the PRA-PH family.

It is found in the cytoplasm. The enzyme catalyses 1-(5-phospho-beta-D-ribosyl)-ATP + H2O = 1-(5-phospho-beta-D-ribosyl)-5'-AMP + diphosphate + H(+). It participates in amino-acid biosynthesis; L-histidine biosynthesis; L-histidine from 5-phospho-alpha-D-ribose 1-diphosphate: step 2/9. This chain is Phosphoribosyl-ATP pyrophosphatase, found in Mycobacterium avium (strain 104).